The chain runs to 280 residues: ESX-1 secretion-associated protein EspJ (280 aa).

Phosphoserine is present on serine 70. 2 stretches are compositionally biased toward low complexity: residues 167–181 (QTIS…QSAQ) and 246–280 (PAQA…TTTL). Residues 167-280 (QTISQTAQQA…TPAPSTTTTL (114 aa)) are disordered.

Residues 76-280 interact with EsxB and an artificial EsxB-EsxA heterodimer. In terms of processing, phosphorylated at Ser-70.

Its subcellular location is the secreted. Functionally, could be involved in regulation of growth and intracellular survival. In Mycobacterium tuberculosis (strain ATCC 25618 / H37Rv), this protein is ESX-1 secretion-associated protein EspJ.